The following is an 86-amino-acid chain: AKEKGGKLTAGLAAGGHWNPNKAPHHGFPWSDDAHLGDLPALTVLHDGTSTNPVLAPRLKKLDEIKGRSLMIHEGGDNHSDHPAPL.

Positions 1 to 26 (AKEKGGKLTAGLAAGGHWNPNKAPHH) are disordered. Residues 7–16 (KLTAGLAAGG) are compositionally biased toward low complexity. Residue His17 participates in Cu cation binding. 4 residues coordinate Zn(2+): His17, His26, His35, and Asp38. Residue His73 participates in Cu cation binding.

This sequence belongs to the Cu-Zn superoxide dismutase family. In terms of assembly, homodimer. Cu cation serves as cofactor. Zn(2+) is required as a cofactor.

The protein localises to the periplasm. The enzyme catalyses 2 superoxide + 2 H(+) = H2O2 + O2. Its function is as follows. Destroys radicals which are normally produced within the cells and which are toxic to biological systems. This Mannheimia haemolytica (Pasteurella haemolytica) protein is Superoxide dismutase [Cu-Zn] (sodC).